The following is a 403-amino-acid chain: uncharacterized protein (403 aa).

The N-terminal stretch at 1 to 26 (MYKFKTNLFLVIYFIAIFSIESSISS) is a signal peptide. Over 27–381 (FNTEINSNSN…DSDNSSFGIS (355 aa)) the chain is Extracellular. N58, N90, N93, N124, N137, N371, and N375 each carry an N-linked (GlcNAc...) asparagine glycan. The helical transmembrane segment at 382 to 402 (IQKYLNSFLNSFIIILIINII) threads the bilayer. Position 403 (I403) is a topological domain, cytoplasmic.

The protein localises to the membrane. This is an uncharacterized protein from Dictyostelium discoideum (Social amoeba).